Consider the following 191-residue polypeptide: Probable DNA-directed RNA polymerase subunit delta (191 aa).

Residues 14–83 (LSMIEVARAI…GDNKWGLRSW (70 aa)) form the HTH HARE-type domain. Composition is skewed to acidic residues over residues 119–133 (EDAI…EDEN) and 143–191 (YDND…ETND). A disordered region spans residues 119-191 (EDAIDYNDDD…DDDYEDETND (73 aa)).

The protein belongs to the RpoE family. RNAP is composed of a core of 2 alpha, a beta and a beta' subunits. The core is associated with a delta subunit and one of several sigma factors.

Its function is as follows. Participates in both the initiation and recycling phases of transcription. In the presence of the delta subunit, RNAP displays an increased specificity of transcription, a decreased affinity for nucleic acids, and an increased efficiency of RNA synthesis because of enhanced recycling. This is Probable DNA-directed RNA polymerase subunit delta from Streptococcus thermophilus (strain ATCC BAA-491 / LMD-9).